Reading from the N-terminus, the 298-residue chain is GTPase Era (298 aa).

The 168-residue stretch at 3-170 (KSGFVAILGR…VQLLKDNLEE (168 aa)) folds into the Era-type G domain. Residues 11-18 (GRPNVGKS) form a G1 region. 11–18 (GRPNVGKS) is a binding site for GTP. The interval 37–41 (QTTRN) is G2. A G3 region spans residues 58-61 (DTPG). Residues 58-62 (DTPGI) and 120-123 (NKID) each bind GTP. The interval 120 to 123 (NKID) is G4. Positions 149–151 (ISA) are G5. Residues 201 to 279 (TQQEVPHSVA…YLETWVKVKK (79 aa)) form the KH type-2 domain.

The protein belongs to the TRAFAC class TrmE-Era-EngA-EngB-Septin-like GTPase superfamily. Era GTPase family. Monomer.

Its subcellular location is the cytoplasm. The protein resides in the cell membrane. Its function is as follows. An essential GTPase that binds both GDP and GTP, with rapid nucleotide exchange. Plays a role in 16S rRNA processing and 30S ribosomal subunit biogenesis and possibly also in cell cycle regulation and energy metabolism. This is GTPase Era from Streptococcus equi subsp. equi (strain 4047).